We begin with the raw amino-acid sequence, 166 residues long: Ribonuclease H2 subunit C (166 aa).

M1 carries the N-acetylmethionine modification.

It belongs to the RNase H2 subunit C family. In terms of assembly, the RNase H2 complex is a heterotrimer composed of the catalytic subunit RNASEH2A and the non-catalytic subunits RNASEH2B and RNASEH2C.

The protein localises to the nucleus. Functionally, non catalytic subunit of RNase H2, an endonuclease that specifically degrades the RNA of RNA:DNA hybrids. Participates in DNA replication, possibly by mediating the removal of lagging-strand Okazaki fragment RNA primers during DNA replication. Mediates the excision of single ribonucleotides from DNA:RNA duplexes. The protein is Ribonuclease H2 subunit C (Rnaseh2c) of Mus musculus (Mouse).